The sequence spans 62 residues: Sperm protamine P1 (62 aa).

The interval 1-62 (MARYRHSRSR…RYSRRRRRRY (62 aa)) is disordered.

It belongs to the protamine P1 family. Testis.

It localises to the nucleus. The protein localises to the chromosome. In terms of biological role, protamines substitute for histones in the chromatin of sperm during the haploid phase of spermatogenesis. They compact sperm DNA into a highly condensed, stable and inactive complex. The protein is Sperm protamine P1 (PRM1) of Lagostrophus fasciatus (Banded hare-wallaby).